The primary structure comprises 357 residues: Protein RecA (357 aa).

Position 73–80 (73–80 (GPESSGKT)) interacts with ATP.

This sequence belongs to the RecA family.

It is found in the cytoplasm. Can catalyze the hydrolysis of ATP in the presence of single-stranded DNA, the ATP-dependent uptake of single-stranded DNA by duplex DNA, and the ATP-dependent hybridization of homologous single-stranded DNAs. It interacts with LexA causing its activation and leading to its autocatalytic cleavage. The polypeptide is Protein RecA (Methylibium petroleiphilum (strain ATCC BAA-1232 / LMG 22953 / PM1)).